Reading from the N-terminus, the 190-residue chain is Translation initiation factor IF-3 (190 aa).

The tract at residues 159–190 is disordered; the sequence is QSEVQQKPKREGRNMIMFLSPRKSPLIKKDNE.

The protein belongs to the IF-3 family. As to quaternary structure, monomer.

The protein localises to the cytoplasm. In terms of biological role, IF-3 binds to the 30S ribosomal subunit and shifts the equilibrium between 70S ribosomes and their 50S and 30S subunits in favor of the free subunits, thus enhancing the availability of 30S subunits on which protein synthesis initiation begins. The chain is Translation initiation factor IF-3 from Prochlorococcus marinus (strain MIT 9215).